Reading from the N-terminus, the 993-residue chain is Testis-expressed protein 13C (993 aa).

Disordered regions lie at residues 281–381 (QEET…SLKK), 520–547 (DSKS…SHSL), and 894–959 (FSKS…PVNW). The segment covering 325 to 335 (GMTSQGDSSSH) has biased composition (polar residues). A compositionally biased stretch (basic and acidic residues) spans 353 to 364 (SRSHSLEKKPVM). The segment covering 944–957 (ESQQQKPASCSSPV) has biased composition (polar residues). The RanBP2-type zinc finger occupies 955–984 (SPVNWACPWCNAMNFPRNKVCSKCKRVRMP).

The protein belongs to the TEX13 family.

This Homo sapiens (Human) protein is Testis-expressed protein 13C.